The following is a 387-amino-acid chain: 3-ketoacyl-CoA thiolase (387 aa).

The active-site Acyl-thioester intermediate is the C91. Residues H343 and C373 each act as proton acceptor in the active site.

Belongs to the thiolase-like superfamily. Thiolase family. As to quaternary structure, heterotetramer of two alpha chains (FadB) and two beta chains (FadA).

It is found in the cytoplasm. The catalysed reaction is an acyl-CoA + acetyl-CoA = a 3-oxoacyl-CoA + CoA. The protein operates within lipid metabolism; fatty acid beta-oxidation. Catalyzes the final step of fatty acid oxidation in which acetyl-CoA is released and the CoA ester of a fatty acid two carbons shorter is formed. The sequence is that of 3-ketoacyl-CoA thiolase from Escherichia coli O139:H28 (strain E24377A / ETEC).